Reading from the N-terminus, the 97-residue chain is Class II hydrophobin 1 (97 aa).

The signal sequence occupies residues 1–16; the sequence is MKFFAIAALFAAAAVA. A propeptide spanning residues 17 to 22 is cleaved from the precursor; it reads QPLEDR. Cystine bridges form between Cys-30–Cys-79, Cys-40–Cys-70, Cys-41–Cys-53, and Cys-80–Cys-91.

The protein belongs to the cerato-ulmin hydrophobin family. In terms of assembly, homotetramer. Further self-assembles to form highly ordered films at water-air interfaces through intermolecular interactions.

It localises to the secreted. It is found in the cell wall. Functionally, aerial growth, conidiation, and dispersal of filamentous fungi in the environment rely upon a capability of their secreting small amphipathic proteins called hydrophobins (HPBs) with low sequence identity. Class I can self-assemble into an outermost layer of rodlet bundles on aerial cell surfaces, conferring cellular hydrophobicity that supports fungal growth, development and dispersal; whereas Class II form highly ordered films at water-air interfaces through intermolecular interactions but contribute nothing to the rodlet structure. Hbf1 is a class II hydrophobin that has a role in hyphal development and is in particular required for the formation of aerial hyphae. The chain is Class II hydrophobin 1 from Hypocrea jecorina (Trichoderma reesei).